A 274-amino-acid chain; its full sequence is Bis(5'-nucleosyl)-tetraphosphatase, symmetrical (274 aa).

The protein belongs to the Ap4A hydrolase family.

The enzyme catalyses P(1),P(4)-bis(5'-adenosyl) tetraphosphate + H2O = 2 ADP + 2 H(+). Functionally, hydrolyzes diadenosine 5',5'''-P1,P4-tetraphosphate to yield ADP. This is Bis(5'-nucleosyl)-tetraphosphatase, symmetrical from Shewanella baltica (strain OS195).